The following is an 873-amino-acid chain: Tyrosine-protein kinase transforming protein Fps (873 aa).

The disordered stretch occupies residues 1 to 46 (ASGQLHRPQPQEHTSTSAAAGTWRLTQASESRHRLPHCSAAPSHQD). The span at 11 to 29 (QEHTSTSAAAGTWRLTQAS) shows a compositional bias: polar residues. The F-BAR domain maps to 50–313 (MGFGPELWCP…AVEMIDPATE (264 aa)). Residues 445 to 471 (GSEEPPPALPLQEDRQSARSTDQERSG) form a disordered region. Positions 456-469 (QEDRQSARSTDQER) are enriched in basic and acidic residues. The SH2 domain occupies 511–600 (WYHGAIPRSE…KSGIVLTRAV (90 aa)). Positions 612–865 (VLLGERIGRG…PSFGAVHQDL (254 aa)) constitute a Protein kinase domain. ATP contacts are provided by residues 618 to 626 (IGRGNFGEV) and K641. The active-site Proton acceptor is D734. Y764 carries the post-translational modification Phosphotyrosine; by autocatalysis.

This sequence belongs to the protein kinase superfamily. Tyr protein kinase family. Fes/fps subfamily.

The enzyme catalyses L-tyrosyl-[protein] + ATP = O-phospho-L-tyrosyl-[protein] + ADP + H(+). The chain is Tyrosine-protein kinase transforming protein Fps (V-FPS) from Gallus gallus (Chicken).